The primary structure comprises 99 residues: Large ribosomal subunit protein uL23 (99 aa).

This sequence belongs to the universal ribosomal protein uL23 family. Part of the 50S ribosomal subunit. Contacts protein L29, and trigger factor when it is bound to the ribosome.

Functionally, one of the early assembly proteins it binds 23S rRNA. One of the proteins that surrounds the polypeptide exit tunnel on the outside of the ribosome. Forms the main docking site for trigger factor binding to the ribosome. The chain is Large ribosomal subunit protein uL23 from Francisella tularensis subsp. tularensis (strain SCHU S4 / Schu 4).